Reading from the N-terminus, the 681-residue chain is Sterile alpha motif domain-containing protein 11 (681 aa).

4 disordered regions span residues 41-77 (RNLK…EDGP), 212-234 (YHLG…HLPS), 251-307 (GPSG…APHV), and 407-498 (LLAL…GAEG). Residue Lys-72 forms a Glycyl lysine isopeptide (Lys-Gly) (interchain with G-Cter in SUMO2) linkage. The span at 219–234 (HGEDPPWHDPPHHLPS) shows a compositional bias: basic and acidic residues. The segment covering 412 to 423 (PQGPPGSGPPTP) has biased composition (pro residues). Thr-485 carries the post-translational modification Phosphothreonine. The 66-residue stretch at 543–608 (WTVDDVCSFV…AQVARRLGRV (66 aa)) folds into the SAM domain. Positions 625-681 (LRAPERELGTGEQPLSPTTATSPYGGGHALAGQTSPKQENGTLALLPGAPDPSQPLC) are disordered. Polar residues-rich tracts occupy residues 637–646 (QPLSPTTATS) and 656–665 (GQTSPKQENG). Ser-640 bears the Phosphoserine mark.

In terms of assembly, self-associates. Component of a Polycomb group (PcG) multiprotein PRC1-like complex. Interacts with SAMD7 and PHC2. In terms of tissue distribution, expressed in the outer and inner nuclear layers, ganglion cell layer and rod photoreceptors of the retina (at protein level). Widely expressed, showing the highest expression in kidney, prostate and retina.

Its subcellular location is the nucleus. In terms of biological role, component of a Polycomb group (PcG) multiprotein PRC1-like complex, essential for establishing rod photoreceptor cell identity and function by silencing nonrod gene expression in developing rod photoreceptor cells. This is Sterile alpha motif domain-containing protein 11 (SAMD11) from Homo sapiens (Human).